Here is a 304-residue protein sequence, read N- to C-terminus: PTB domain-containing engulfment adapter protein 1 (304 aa).

Thr-16 bears the Phosphothreonine mark. Residues 21 to 176 (SKHFIPYNAK…AGLQKRIQDL (156 aa)) form the PID domain. A coiled-coil region spans residues 158–202 (KDVETRKQIAGLQKRIQDLETENMELKNKVQDLENQLRITQVSAP). Ser-223 carries the post-translational modification Phosphoserine. The tract at residues 223–246 (SPISHQSSMPTRNGTQPPPVPSRS) is disordered. Over residues 225–237 (ISHQSSMPTRNGT) the composition is skewed to polar residues.

The protein belongs to the ced-6 family. In terms of assembly, homodimer. Interacts with clathrin. Interacts with GDP-bound ARF6, but not with GTP-bound ARF6. Part of a complex composed of GULP1, ACAP1 and ARF6. Interacts with ACAP1, LRP1, MEGF10 and STAB2. Widely expressed. Detected in macrophages, pancreas, kidney, skeletal muscle, heart, colon, intestine, lung, placenta and ovary.

The protein localises to the cytoplasm. May function as an adapter protein. Required for efficient phagocytosis of apoptotic cells. Modulates cellular glycosphingolipid and cholesterol transport. May play a role in the internalization and endosomal trafficking of various LRP1 ligands, such as PSAP. Increases cellular levels of GTP-bound ARF6. The chain is PTB domain-containing engulfment adapter protein 1 (GULP1) from Homo sapiens (Human).